We begin with the raw amino-acid sequence, 791 residues long: MADDKVAILTDDEEEQKRKYVLADPFNGISREPEPPSNETPSSTETSAIPEEEIDWIEKHCVKINNDLLISKVFYFFFYSAYGSLYPLLPVYYKQLGMSPSQSGLLVGIRYFIEFCSAPFWGVVADRFKKGKIVLLFSLLCWVLFNLGIGFVKPATLRCVPKIRPTTHPTNASHQLTILPTNSSFTSFLTISPKMREKRNLLETRLNVSDTVTLPTAPNMNSEPTLQPQTGEITNRMMDLTLNSSTATPVSPGSVTKETTTVIVTTTKSLPSDQVMLVYDQQEVEAIFLVILVVVIIGEFFSASSVTIVDTVTLQYLGKHRDRYGLQRMWGSLGWGLAMLSVGIGIDYTHIEVLIDGKGCKPPEYRNYQIVFIVFGVLMTMALIVATQFRFRYNHFKNDDSKGKEVEIPQVERNNSTESSEETPTTTSHSQAFNFWDLIKLLCSVQYGSVLFVAWFMGFGYGFVFTFLYWHLEDLNGTTTLFGVCSVLSHVSELTAYFFSHKLIELIGHIRVLYIGLACNTARYIYISYLENAWTVLPMEVLQGVTHAAIWAACISYLSAAVPPELRTSAQGILQGLHLGLGRGCGAMIGGVLVNYFGAAATFRGIGMACLVILLLFALIQWLAVPDEEEDKTMLAERIPVPSSPVPIATIDLVQQQTEDVMPRIEPRLPPKKTKHQEEQEDVNKPAWGVSSSPWVTFVYALYQIKEMMQLTRDNRASEIQPLQGTNENRENSPAGRAQPVPCETHSDPSRNQPSPDAAASQTQTSPAHPSVDPCTEESEEQQAQLAAGGH.

A2 is subject to N-acetylalanine. Position 10 is a phosphothreonine (T10). A disordered region spans residues 22–47 (LADPFNGISREPEPPSNETPSSTETS). Residues 37-47 (SNETPSSTETS) show a composition bias toward low complexity. A run of 6 helical transmembrane segments spans residues 73–93 (VFYF…PVYY), 105–125 (LLVG…GVVA), 132–152 (KIVL…IGFV), 286–306 (AIFL…ASSV), 335–355 (WGLA…EVLI), and 369–389 (QIVF…ATQF). Positions 407–427 (EIPQVERNNSTESSEETPTTT) are disordered. Residues 416–427 (STESSEETPTTT) show a composition bias toward low complexity. 6 helical membrane passes run 450 to 470 (VLFV…FLYW), 479 to 499 (TTLF…AYFF), 507 to 527 (IGHI…YIYI), 544 to 564 (GVTH…AVPP), 579 to 599 (LGLG…YFGA), and 605 to 625 (GIGM…WLAV). 2 disordered regions span residues 662–687 (MPRI…NKPA) and 723–791 (LQGT…AGGH). The span at 750–768 (SRNQPSPDAAASQTQTSPA) shows a compositional bias: polar residues. Residues 782–791 (QQAQLAAGGH) are compositionally biased toward low complexity.

This sequence belongs to the major facilitator superfamily. MFSD6 family. May interact with HLA-B62. In terms of tissue distribution, widely expressed. Expression levels in peripheral blood mononuclear cells are highly variable between individuals, including no expression at all.

Its subcellular location is the membrane. This is Major facilitator superfamily domain-containing protein 6 (MFSD6) from Homo sapiens (Human).